The following is an 83-amino-acid chain: Acyl carrier protein (83 aa).

The region spanning 2-77 is the Carrier domain; it reads NEILSKIKSI…DANQYIKKYL (76 aa). O-(pantetheine 4'-phosphoryl)serine is present on Ser37.

This sequence belongs to the acyl carrier protein (ACP) family. In terms of processing, 4'-phosphopantetheine is transferred from CoA to a specific serine of apo-ACP by AcpS. This modification is essential for activity because fatty acids are bound in thioester linkage to the sulfhydryl of the prosthetic group.

It localises to the cytoplasm. It participates in lipid metabolism; fatty acid biosynthesis. In terms of biological role, carrier of the growing fatty acid chain in fatty acid biosynthesis. The sequence is that of Acyl carrier protein from Karelsulcia muelleri (strain GWSS) (Sulcia muelleri).